Reading from the N-terminus, the 874-residue chain is Alanine--tRNA ligase (874 aa).

Residues H562, H566, C665, and H669 each contribute to the Zn(2+) site.

It belongs to the class-II aminoacyl-tRNA synthetase family. Requires Zn(2+) as cofactor.

The protein localises to the cytoplasm. The enzyme catalyses tRNA(Ala) + L-alanine + ATP = L-alanyl-tRNA(Ala) + AMP + diphosphate. Catalyzes the attachment of alanine to tRNA(Ala) in a two-step reaction: alanine is first activated by ATP to form Ala-AMP and then transferred to the acceptor end of tRNA(Ala). Also edits incorrectly charged Ser-tRNA(Ala) and Gly-tRNA(Ala) via its editing domain. This chain is Alanine--tRNA ligase, found in Pseudomonas syringae pv. tomato (strain ATCC BAA-871 / DC3000).